A 293-amino-acid chain; its full sequence is Diaminopimelate epimerase (293 aa).

Residues Asn-17, Gln-47, and Asn-67 each contribute to the substrate site. Catalysis depends on Cys-76, which acts as the Proton donor. Substrate contacts are provided by residues 77-78, Asn-164, Asn-197, and 215-216; these read GN and ER. Catalysis depends on Cys-224, which acts as the Proton acceptor. 225–226 is a substrate binding site; the sequence is GS.

This sequence belongs to the diaminopimelate epimerase family. Homodimer.

Its subcellular location is the cytoplasm. It catalyses the reaction (2S,6S)-2,6-diaminopimelate = meso-2,6-diaminopimelate. Its pathway is amino-acid biosynthesis; L-lysine biosynthesis via DAP pathway; DL-2,6-diaminopimelate from LL-2,6-diaminopimelate: step 1/1. In terms of biological role, catalyzes the stereoinversion of LL-2,6-diaminopimelate (L,L-DAP) to meso-diaminopimelate (meso-DAP), a precursor of L-lysine and an essential component of the bacterial peptidoglycan. The protein is Diaminopimelate epimerase of Rhodopseudomonas palustris (strain HaA2).